We begin with the raw amino-acid sequence, 89 residues long: MAITQERKNEIISEYKVHETDTGSPEVQIAVLTEEITSLNEHLRVHKKDHHSRRGLLKMVGKRRNLLTYLRNKDVTRYRELIKKLGLRR.

This sequence belongs to the universal ribosomal protein uS15 family. In terms of assembly, part of the 30S ribosomal subunit. Forms a bridge to the 50S subunit in the 70S ribosome, contacting the 23S rRNA.

In terms of biological role, one of the primary rRNA binding proteins, it binds directly to 16S rRNA where it helps nucleate assembly of the platform of the 30S subunit by binding and bridging several RNA helices of the 16S rRNA. Forms an intersubunit bridge (bridge B4) with the 23S rRNA of the 50S subunit in the ribosome. The polypeptide is Small ribosomal subunit protein uS15 (Oceanobacillus iheyensis (strain DSM 14371 / CIP 107618 / JCM 11309 / KCTC 3954 / HTE831)).